Consider the following 250-residue polypeptide: Replicating protein (250 aa).

Disordered stretches follow at residues 1–23 (MFQQIGAVQAKSGTDEPAHPCEK) and 168–250 (KAHM…KAFE). Composition is skewed to basic and acidic residues over residues 13 to 23 (GTDEPAHPCEK) and 178 to 190 (DRLRETVEDRTRA). The segment covering 218-237 (SRCSFTTPNRPRRTLPSSHP) has biased composition (polar residues).

Its function is as follows. Required for replication. It likely regulates pTAR copy number. This chain is Replicating protein (repA), found in Rhizobium radiobacter (Agrobacterium tumefaciens).